Consider the following 665-residue polypeptide: Fructose-1,6-bisphosphatase class 3 (665 aa).

This sequence belongs to the FBPase class 3 family. It depends on Mn(2+) as a cofactor.

The enzyme catalyses beta-D-fructose 1,6-bisphosphate + H2O = beta-D-fructose 6-phosphate + phosphate. It participates in carbohydrate biosynthesis; gluconeogenesis. The protein is Fructose-1,6-bisphosphatase class 3 of Clostridium acetobutylicum (strain ATCC 824 / DSM 792 / JCM 1419 / IAM 19013 / LMG 5710 / NBRC 13948 / NRRL B-527 / VKM B-1787 / 2291 / W).